Here is a 398-residue protein sequence, read N- to C-terminus: uncharacterized protein (398 aa).

The Radical SAM core domain occupies 21 to 253; sequence TNFGPTNLII…WQLTSTSEPE (233 aa). [4Fe-4S] cluster is bound by residues Cys37, Cys41, and Cys44.

The protein belongs to the radical SAM superfamily. Anaerobic sulfatase-maturating enzyme family. Requires [4Fe-4S] cluster as cofactor.

This is an uncharacterized protein from Synechocystis sp. (strain ATCC 27184 / PCC 6803 / Kazusa).